We begin with the raw amino-acid sequence, 151 residues long: MRSSTILIVLGIAILAVNGVATALTRDGIEMGTQEKSRLLRSTSTEHETDEERKFRFKLPSFRFKRRVKVPKVAKPKKKNPVMANRARKYHDVLHSDRGYDVYDMMRSDKLTLQELIEFLTTYGQIDKNGIKILTDGLRSYNIPKAYPVAK.

An N-terminal signal peptide occupies residues 1-19 (MRSSTILIVLGIAILAVNG). Positions 38-53 (RLLRSTSTEHETDEER) match the RxLR-dEER motif.

It belongs to the RxLR effector family.

It is found in the secreted. Its subcellular location is the host nucleus. Effector that acts as a broad suppressor of cell death to interrupt plant immunity. Inhibits cell death induced by cell death-inducing proteins, including the PAMP elicitor INF1 from P.infestans. In Plasmopara viticola (Downy mildew of grapevine), this protein is Secreted RxLR effector protein 30.